A 54-amino-acid chain; its full sequence is Small, acid-soluble spore protein gamma-type (54 aa).

The tract at residues 1 to 54 (MAKKNRNKQQQEMQQQQQQHQAEFANEFAEGSSAEQARQQQQKAAGKRQKKNQQ) is disordered. Low complexity-rich tracts occupy residues 10 to 21 (QQEMQQQQQQHQ) and 29 to 44 (AEGS…QQKA). A compositionally biased stretch (basic residues) spans 45-54 (AGKRQKKNQQ).

Belongs to the gamma-type SASP family.

SASP are proteins degraded in the first minutes of spore germination and provide amino acids for both new protein synthesis and metabolism. These proteins may be involved in dormant spore's high resistance to UV light. This is Small, acid-soluble spore protein gamma-type (sspA) from Alkalihalophilus pseudofirmus (strain ATCC BAA-2126 / JCM 17055 / OF4) (Bacillus pseudofirmus).